Reading from the N-terminus, the 462-residue chain is UDP-N-acetylmuramate--L-alanine ligase (462 aa).

Gly117–Thr123 serves as a coordination point for ATP.

Belongs to the MurCDEF family.

It localises to the cytoplasm. The catalysed reaction is UDP-N-acetyl-alpha-D-muramate + L-alanine + ATP = UDP-N-acetyl-alpha-D-muramoyl-L-alanine + ADP + phosphate + H(+). It functions in the pathway cell wall biogenesis; peptidoglycan biosynthesis. Cell wall formation. The sequence is that of UDP-N-acetylmuramate--L-alanine ligase from Streptomyces coelicolor (strain ATCC BAA-471 / A3(2) / M145).